The following is a 201-amino-acid chain: Small ribosomal subunit protein uS4 (201 aa).

The S4 RNA-binding domain occupies 91-151; it reads SRLDNVVYRA…EKSQKMIWFE (61 aa).

Belongs to the universal ribosomal protein uS4 family. Part of the 30S ribosomal subunit. Contacts protein S5. The interaction surface between S4 and S5 is involved in control of translational fidelity.

In terms of biological role, one of the primary rRNA binding proteins, it binds directly to 16S rRNA where it nucleates assembly of the body of the 30S subunit. Functionally, with S5 and S12 plays an important role in translational accuracy. This Corynebacterium diphtheriae (strain ATCC 700971 / NCTC 13129 / Biotype gravis) protein is Small ribosomal subunit protein uS4.